Here is a 462-residue protein sequence, read N- to C-terminus: Calcitonin gene-related peptide type 1 receptor (462 aa).

The first 22 residues, 1–22 (MEKKYILYFLFLLPFFMILVIA), serve as a signal peptide directing secretion. Topologically, residues 23–140 (ETEEENPDDL…NTHEKVQTAL (118 aa)) are extracellular. 3 disulfide bridges follow: cysteine 49–cysteine 75, cysteine 66–cysteine 106, and cysteine 89–cysteine 128. N-linked (GlcNAc...) asparagine glycans are attached at residues asparagine 67, asparagine 119, and asparagine 124. A helical transmembrane segment spans residues 141–165 (NLFYLTIIGHGLSIASLLISLGIFF). Over 166 to 176 (YFKSLSCQRIT) the chain is Cytoplasmic. A helical transmembrane segment spans residues 177–199 (LHKNLFFSFVCNSIVTIIHLTAV). Residues 200–210 (ANNQALVATNP) are Extracellular-facing. Residues 211 to 239 (VSCKVFQFIHLYLMGCNYFWMLCEGIYLH) form a helical membrane-spanning segment. The Cytoplasmic segment spans residues 240 to 253 (TLIVVAVFAEKQHL). A helical transmembrane segment spans residues 254 to 274 (MWYYFLGWGFPLIPACIHAVA). The Extracellular segment spans residues 275 to 290 (RRLYYNDNCWISSDTH). The required for RAMP3 interaction stretch occupies residues 289–290 (TH). Residues 291-315 (LLYIIHGPICAALLVNLFFLLNIVR) traverse the membrane as a helical segment. The Cytoplasmic segment spans residues 316–330 (VLITKLKVTHQAESN). The helical transmembrane segment at 331 to 352 (LYMKAVRATLILVPLLGIEFVL) threads the bilayer. Residues 353–367 (IPWRPEGKIAEEVYD) are Extracellular-facing. The helical transmembrane segment at 368-388 (YIMHILVHYQGLLVSTIYCFF) threads the bilayer. The Cytoplasmic portion of the chain corresponds to 389–462 (NGEVQAILRR…IVIKPEKLYD (74 aa)). Phosphoserine occurs at positions 421 and 446.

It belongs to the G-protein coupled receptor 2 family. In terms of assembly, heterodimer of CALCRL and RAMP1; the receptor complex functions as CGRP receptor. Heterodimer of CALCRL and RAMP2 or CALCRL and RAMP3; the complexes function as adrenomedullin receptor. As to expression, detected in lung and coronary artery.

It is found in the cell membrane. Its function is as follows. G protein-coupled receptor which specificity is determined by its interaction with receptor-activity-modifying proteins (RAMPs). Together with RAMP1, form the receptor complex for calcitonin-gene-related peptides CALCA/CGRP1 and CALCB/CGRP2. Together with RAMP2 or RAMP3, function as receptor complexes for adrenomedullin (ADM and ADM2). Ligand binding causes a conformation change that triggers signaling via guanine nucleotide-binding proteins (G proteins) and modulates the activity of downstream effectors. Activates cAMP-dependent pathway. The sequence is that of Calcitonin gene-related peptide type 1 receptor (CALCRL) from Sus scrofa (Pig).